The primary structure comprises 40 residues: MKLLSITFLFGLLALASANPLSPGNVIINGDCKVCNIRGD.

The N-terminal stretch at 1-18 (MKLLSITFLFGLLALASA) is a signal peptide. The propeptide at 19–23 (NPLSP) is removed by a dipeptidylpeptidase. A disulfide bridge connects residues C32 and C35.

It belongs to the bomanin family.

It is found in the secreted. Its function is as follows. Secreted immune-induced peptide induced by Toll signaling. Has a role in resistance to bacterial and fungal infections. The strength of antimicrobial activity appears to correlate with the overall level of expression. The sequence is that of Bomanin Short 6 from Drosophila melanogaster (Fruit fly).